Consider the following 517-residue polypeptide: Meiosis-specific transcription factor mei4 (517 aa).

Positions 81–172 (KPPCSYATLI…QNFVSVRLHR (92 aa)) form a DNA-binding region, fork-head. The disordered stretch occupies residues 170–278 (LHRSHSTDSN…PNAETQEDLP (109 aa)). Low complexity predominate over residues 209–223 (NSFNSSTSTSGSSSN). Polar residues predominate over residues 230–246 (NDASQPSNQDSSLNSNI). The segment covering 254–270 (SNVQSNSSSSENVPKPN) has biased composition (low complexity).

The protein localises to the nucleus. Its function is as follows. Functions as a meiosis-specific transcription factor. Binds to the 5'-GTAAAYA-3' consensus sequence of the promoter of the spo6 gene. The protein is Meiosis-specific transcription factor mei4 (mei4) of Schizosaccharomyces pombe (strain 972 / ATCC 24843) (Fission yeast).